Reading from the N-terminus, the 330-residue chain is Cyclin N-terminal domain-containing protein 1 (330 aa).

Positions 27-178 (DALLHLAQQN…VLKSLNFRIN (152 aa)) constitute a Cyclin N-terminal domain.

In terms of assembly, interacts with PRR19; this interaction promotes crossover formation. Interacts with RFC3 and RFC4; these interactions facilitate crossover formation. Interacts with CDC34; this interaction regulates the cell-cycle progression.

Its subcellular location is the nucleus. The protein localises to the cytoplasm. It localises to the chromosome. In terms of biological role, plays a role in the different steps of crossover formation during meiotic recombination. Participates in the crossover differentiation step of crossover-specific recombination intermediates through its interaction with PRR19. In addition, stimulates crossover formation through the interactions with RFC3 and RFC4 and simultaneously regulates cell-cycle progression through interactions with CDC34 and subsequent ubiquitination of WEE1. May also participates in an active deselection process that destabilizes or removes excess pre-CO intermediates. The chain is Cyclin N-terminal domain-containing protein 1 from Homo sapiens (Human).